Here is a 130-residue protein sequence, read N- to C-terminus: Phosphoribosyl-AMP cyclohydrolase (130 aa).

D77 provides a ligand contact to Mg(2+). Residue C78 participates in Zn(2+) binding. 2 residues coordinate Mg(2+): D79 and D81. C95 and C102 together coordinate Zn(2+).

Belongs to the PRA-CH family. Homodimer. It depends on Mg(2+) as a cofactor. Zn(2+) is required as a cofactor.

Its subcellular location is the cytoplasm. It carries out the reaction 1-(5-phospho-beta-D-ribosyl)-5'-AMP + H2O = 1-(5-phospho-beta-D-ribosyl)-5-[(5-phospho-beta-D-ribosylamino)methylideneamino]imidazole-4-carboxamide. It functions in the pathway amino-acid biosynthesis; L-histidine biosynthesis; L-histidine from 5-phospho-alpha-D-ribose 1-diphosphate: step 3/9. Catalyzes the hydrolysis of the adenine ring of phosphoribosyl-AMP. The chain is Phosphoribosyl-AMP cyclohydrolase from Pseudomonas savastanoi pv. phaseolicola (strain 1448A / Race 6) (Pseudomonas syringae pv. phaseolicola (strain 1448A / Race 6)).